The following is a 196-amino-acid chain: Lipoprotein signal peptidase (196 aa).

The next 3 helical transmembrane spans lie at 17-37, 73-93, and 96-116; these read SIII…IDNL, SNAI…YLMI, and NTIG…GNLI. Active-site residues include Asp-126 and Asp-144. The helical transmembrane segment at 135–155 threads the bilayer; it reads YSFPVFNLADCFITIGVIILI.

This sequence belongs to the peptidase A8 family.

It is found in the cell inner membrane. The enzyme catalyses Release of signal peptides from bacterial membrane prolipoproteins. Hydrolyzes -Xaa-Yaa-Zaa-|-(S,diacylglyceryl)Cys-, in which Xaa is hydrophobic (preferably Leu), and Yaa (Ala or Ser) and Zaa (Gly or Ala) have small, neutral side chains.. It participates in protein modification; lipoprotein biosynthesis (signal peptide cleavage). This protein specifically catalyzes the removal of signal peptides from prolipoproteins. The protein is Lipoprotein signal peptidase of Rickettsia akari (strain Hartford).